Here is a 293-residue protein sequence, read N- to C-terminus: 4-diphosphocytidyl-2-C-methyl-D-erythritol kinase (293 aa).

Residue K16 is part of the active site. ATP is bound at residue 99–109 (PMGAGLGGGSS). The active site involves D141.

The protein belongs to the GHMP kinase family. IspE subfamily.

The catalysed reaction is 4-CDP-2-C-methyl-D-erythritol + ATP = 4-CDP-2-C-methyl-D-erythritol 2-phosphate + ADP + H(+). Its pathway is isoprenoid biosynthesis; isopentenyl diphosphate biosynthesis via DXP pathway; isopentenyl diphosphate from 1-deoxy-D-xylulose 5-phosphate: step 3/6. Its function is as follows. Catalyzes the phosphorylation of the position 2 hydroxy group of 4-diphosphocytidyl-2C-methyl-D-erythritol. This is 4-diphosphocytidyl-2-C-methyl-D-erythritol kinase from Burkholderia cenocepacia (strain ATCC BAA-245 / DSM 16553 / LMG 16656 / NCTC 13227 / J2315 / CF5610) (Burkholderia cepacia (strain J2315)).